The primary structure comprises 138 residues: Biopolymer transport protein exbD1 (138 aa).

Over 1-16 the chain is Cytoplasmic; sequence MIKSSAKHNDFGLTPD. Residues 17–37 traverse the membrane as a helical segment; sequence LTPLLDIIFIVMVFLLLTASV. Residues 38 to 138 are Periplasmic-facing; sequence RLESLEVALP…TQLLTEPSHS (101 aa).

Belongs to the ExbD/TolR family. As to quaternary structure, the accessory proteins ExbB and ExbD seem to form a complex with TonB.

The protein resides in the cell inner membrane. Functionally, involved in the TonB-dependent energy-dependent transport of various receptor-bound substrates. This Vibrio cholerae serotype O1 (strain ATCC 39315 / El Tor Inaba N16961) protein is Biopolymer transport protein exbD1 (exbD1).